A 49-amino-acid chain; its full sequence is Large ribosomal subunit protein bL33B (49 aa).

This sequence belongs to the bacterial ribosomal protein bL33 family.

This Bacillus cereus (strain ATCC 14579 / DSM 31 / CCUG 7414 / JCM 2152 / NBRC 15305 / NCIMB 9373 / NCTC 2599 / NRRL B-3711) protein is Large ribosomal subunit protein bL33B.